A 239-amino-acid polypeptide reads, in one-letter code: Ribonuclease P protein component 3 (239 aa).

The protein belongs to the eukaryotic/archaeal RNase P protein component 3 family. As to quaternary structure, consists of a catalytic RNA component and at least 4-5 protein subunits.

Its subcellular location is the cytoplasm. The enzyme catalyses Endonucleolytic cleavage of RNA, removing 5'-extranucleotides from tRNA precursor.. Its function is as follows. Part of ribonuclease P, a protein complex that generates mature tRNA molecules by cleaving their 5'-ends. The chain is Ribonuclease P protein component 3 from Methanosarcina mazei (strain ATCC BAA-159 / DSM 3647 / Goe1 / Go1 / JCM 11833 / OCM 88) (Methanosarcina frisia).